Consider the following 162-residue polypeptide: Caveolin-2 (162 aa).

Residues 1–86 lie on the Cytoplasmic side of the membrane; the sequence is MGLETEKADV…FEISKYVMYK (86 aa). Y19 carries the post-translational modification Phosphotyrosine. Phosphoserine is present on residues S20 and S36. The segment at residues 87–107 is an intramembrane region (helical); the sequence is FLTVFLAIPLAFVAGILFATL. At 108–162 the chain is on the cytoplasmic side; sequence SCLHIWIIMPFVKTCLMVLPSVQTIWKSVTDVIIAPLCTSVGRSFSSISLQLSHD.

This sequence belongs to the caveolin family. As to quaternary structure, homodimer. Caveolin-1 and -2 colocalize and form a stable hetero-oligomeric complex.

Its subcellular location is the golgi apparatus membrane. The protein localises to the cell membrane. The protein resides in the membrane. It localises to the caveola. Its function is as follows. May act as a scaffolding protein within caveolar membranes. Interacts directly with G-protein alpha subunits and can functionally regulate their activity. Caveolin-2 may function as an accessory protein in conjunction with caveolin-1. This Microcebus murinus (Gray mouse lemur) protein is Caveolin-2 (CAV2).